The primary structure comprises 603 residues: Multicopper oxidase MCE (603 aa).

An N-terminal signal peptide occupies residues 1 to 21; that stretch reads MNTFICSALICLSWLPGFIQA. Positions 30 to 144 constitute a Plastocyanin-like 1 domain; sequence ITYAKGAPDG…YGALWIRPKE (115 aa). N-linked (GlcNAc...) asparagine glycosylation is present at asparagine 75. Cu cation-binding residues include histidine 79, histidine 81, histidine 123, and histidine 125. N-linked (GlcNAc...) asparagine glycans are attached at residues asparagine 155, asparagine 180, asparagine 235, asparagine 256, asparagine 272, asparagine 275, asparagine 388, asparagine 394, asparagine 413, and asparagine 455. Positions 173-353 constitute a Plastocyanin-like 2 domain; that stretch reads LIVSDWSNFT…TPGDYTIRLP (181 aa). A Plastocyanin-like 3 domain is found at 450–581; that stretch reads LLYNPNSTAA…GGMAGVIMDG (132 aa). Histidine 495 is a binding site for Cu cation. N-linked (GlcNAc...) asparagine glycans are attached at residues asparagine 512 and asparagine 595.

This sequence belongs to the multicopper oxidase family.

It carries out the reaction 4 monapinone A + O2 = 2 dinapinone A + 2 H2O. It catalyses the reaction 4 monapinone E + O2 = 2 dinapinone E + 2 H2O. It participates in secondary metabolite biosynthesis. Multicopper oxidase; part of the gene cluster that mediates the biosynthesis of dinapinones DPA1 (or (M)-DPA) and DPA2 (or (P)-DPA), biaryl dihydronaphthopyranones that act in concert as inhibitors of triacylglycerol accumulation in mammalian cells. The first step in the pathway corresponds to the biosynthesis of dihydroxy-decanoyl-CoA by the fungal type I fatty acid synthase (formed by ORF4 and ORF5). The cluster-specific polyketide synthase (ORF7) then accepts and extends dihydroxy-decanoyl-CoA with 6 malonyl-CoA moieties and cyclizes the molecule to produce a putative polyhydroxynaphthopyranone intermediate, which is further methylated by the cluster-specific methyltransferase (ORF1) at 7-OH to produce monapinone A (MPA). MCE catalyzes the regioselective biaryl coupling of monapinone A (MPA) at the 8,8'-positions to afford dimeric atropisomers DPA1 and DPA2 in a ratio of approximately 1:2.5. Monapinone E (MPE) also appears to be a substrate for MCE and provides the atropisomers dinapinones DPE1 (or (M)-DPE) and DPE2 (or (P)-DPE). The sequence is that of Multicopper oxidase MCE from Talaromyces pinophilus (Penicillium pinophilum).